Here is a 194-residue protein sequence, read N- to C-terminus: Orotate phosphoribosyltransferase (194 aa).

117–125 lines the 5-phospho-alpha-D-ribose 1-diphosphate pocket; that stretch reads EDIVTTGLS. Thr-121 and Arg-149 together coordinate orotate.

It belongs to the purine/pyrimidine phosphoribosyltransferase family. PyrE subfamily. In terms of assembly, homodimer. Requires Mg(2+) as cofactor.

It catalyses the reaction orotidine 5'-phosphate + diphosphate = orotate + 5-phospho-alpha-D-ribose 1-diphosphate. It participates in pyrimidine metabolism; UMP biosynthesis via de novo pathway; UMP from orotate: step 1/2. Catalyzes the transfer of a ribosyl phosphate group from 5-phosphoribose 1-diphosphate to orotate, leading to the formation of orotidine monophosphate (OMP). The protein is Orotate phosphoribosyltransferase of Parvibaculum lavamentivorans (strain DS-1 / DSM 13023 / NCIMB 13966).